The chain runs to 273 residues: Large ribosomal subunit protein uL2cz/uL2cy (273 aa).

Disordered stretches follow at residues 1-23 (MAIH…SQVK) and 224-273 (NPVD…RRRK). Residues 262-273 (KYSDRFILRRRK) show a composition bias toward basic and acidic residues.

It belongs to the universal ribosomal protein uL2 family. As to quaternary structure, part of the 50S ribosomal subunit.

The protein localises to the plastid. It is found in the chloroplast. The polypeptide is Large ribosomal subunit protein uL2cz/uL2cy (rpl2-A) (Acorus calamus var. americanus (American sweet flag)).